The sequence spans 574 residues: Septation ring formation regulator EzrA (574 aa).

The Extracellular segment spans residues 1-7 (MSSGIIL). The chain crosses the membrane as a helical span at residues 8-26 (LIVAIVLLVIIAYLIGVII). At 27 to 574 (RKRNDSMIGT…YERTREHIRF (548 aa)) the chain is on the cytoplasmic side. Coiled coils occupy residues 102-140 (NFIR…QEEK), 243-379 (RRLL…GQEI), and 459-520 (QLEA…SFEA).

It belongs to the EzrA family.

It localises to the cell membrane. Its function is as follows. Negative regulator of FtsZ ring formation; modulates the frequency and position of FtsZ ring formation. Inhibits FtsZ ring formation at polar sites. Interacts either with FtsZ or with one of its binding partners to promote depolymerization. The sequence is that of Septation ring formation regulator EzrA from Streptococcus uberis (strain ATCC BAA-854 / 0140J).